Here is a 72-residue protein sequence, read N- to C-terminus: Potassium channel toxin epsilon-KTx 1.1 (72 aa).

The signal sequence occupies residues 1 to 30 (MKLSCGFLLILLVLSAMIATFSEVEAMKPS). 4 cysteine pairs are disulfide-bonded: Cys-34–Cys-42, Cys-37–Cys-58, Cys-41–Cys-51, and Cys-46–Cys-56. Residues 60-72 (GRSDLNDELEKYQ) constitute a propeptide that is removed on maturation.

Belongs to the short scorpion toxin superfamily. Potassium channel inhibitor family. Epsilon-KTx 01 subfamily. In terms of tissue distribution, expressed by the venom gland.

Its subcellular location is the secreted. Functionally, potassium channel blocker. At 3 uM, this toxin blocks voltage-independently voltage-gated potassium channels rKv1.2/KCNA2 (25%), hKv1.3/KCNA3 (27%), rKv4.2/KCND2 (25%), Kv10.1/KCNH1/EAG1 (15%), Kv11/hERG (12%), and Shaker-IR (10%). On hKv1.3/KCNA3, the IC(50) is 17.1 +-3.3 uM. The chain is Potassium channel toxin epsilon-KTx 1.1 from Tityus serrulatus (Brazilian scorpion).